The sequence spans 2392 residues: Protein Ycf2 (2392 aa).

Residue 1658-1665 (GPTEIGKS) coordinates ATP.

It belongs to the Ycf2 family.

Its subcellular location is the plastid. The protein resides in the chloroplast stroma. Probable ATPase of unknown function. Its presence in a non-photosynthetic plant (Epifagus virginiana) and experiments in tobacco indicate that it has an essential function which is probably not related to photosynthesis. The protein is Protein Ycf2 of Anthoceros angustus (Hornwort).